The sequence spans 264 residues: ATP synthase subunit a (264 aa).

Helical transmembrane passes span 39–59, 97–117, 139–159, 205–225, and 239–259; these read LDTL…FYIV, VAPL…MDLV, TADP…VIFY, LFGN…LPWW, and LLVI…YISL.

Belongs to the ATPase A chain family. In terms of assembly, F-type ATPases have 2 components, CF(1) - the catalytic core - and CF(0) - the membrane proton channel. CF(1) has five subunits: alpha(3), beta(3), gamma(1), delta(1), epsilon(1). CF(0) has three main subunits: a(1), b(2) and c(9-12). The alpha and beta chains form an alternating ring which encloses part of the gamma chain. CF(1) is attached to CF(0) by a central stalk formed by the gamma and epsilon chains, while a peripheral stalk is formed by the delta and b chains.

It localises to the cell inner membrane. Its function is as follows. Key component of the proton channel; it plays a direct role in the translocation of protons across the membrane. This Coxiella burnetii (strain RSA 331 / Henzerling II) protein is ATP synthase subunit a.